Reading from the N-terminus, the 1067-residue chain is Chitinase-like protein C25A8.4 (1067 aa).

The first 18 residues, 1 to 18 (MGIKTLIWLSILVVGIYC), serve as a signal peptide directing secretion. 3 consecutive GH18 domains span residues 26-364 (PVHY…IRNT), 372-727 (CTRL…QVCQ), and 743-1067 (FVVS…HKCR). Cys-30 and Cys-51 form a disulfide bridge. Residues Asn-47 and Asn-216 are each glycosylated (N-linked (GlcNAc...) asparagine). Cys-376 and Cys-397 are oxidised to a cystine. N-linked (GlcNAc...) asparagine glycans are attached at residues Asn-475, Asn-538, and Asn-710. Cys-747 and Cys-768 form a disulfide bridge. 2 N-linked (GlcNAc...) asparagine glycosylation sites follow: Asn-797 and Asn-830. Glu-855 functions as the Proton donor in the catalytic mechanism. N-linked (GlcNAc...) asparagine glycosylation is found at Asn-887, Asn-933, and Asn-1010.

This sequence belongs to the glycosyl hydrolase 18 family.

It localises to the secreted. Its function is as follows. Putative chitinase. The polypeptide is Chitinase-like protein C25A8.4 (cht-3) (Caenorhabditis elegans).